The following is a 546-amino-acid chain: Smad protein daf-8 (546 aa).

In terms of domain architecture, MH1 spans 16 to 137 (AMAQKVLEET…YRWVELPTCQ (122 aa)). Disordered regions lie at residues 234 to 268 (LQQS…FIPN) and 292 to 317 (ENFS…PIEP). The segment covering 292–302 (ENFSSENNGNR) has biased composition (polar residues). In terms of domain architecture, MH2 spans 349-546 (WLKLIYYEEG…APPRICSSRT (198 aa)).

This sequence belongs to the dwarfin/SMAD family. In terms of assembly, homodimer. Interacts with R-SMAD daf-14 and co-SMAD daf-3. Interacts with orphan nuclear receptor nhr-69. As to expression, expressed in the excretory cell and gonadal distal tip cells (DTCs).

The protein localises to the cytoplasm. It is found in the nucleus. In terms of biological role, probably a receptor-regulated SMAD (R-SMAD) that is an intracellular signal transducer and transcriptional modulator activated by TGF-beta-like daf-7 signaling. Plays a role in TGF-beta-like daf-7 signaling in regulating entry into a developmentally arrested larval state known as dauer, in response to harsh environmental conditions; partially redundant with R-SMAD daf-14. Plays a role in inhibiting mitosis and promoting a switch to meiosis in the germ line, perhaps by down-regulating lag-2 transcription in the gonadal distal tip cells (DTCs). In cooperation with orphan nuclear receptor nhr-69 modulates the Insulin/IGF-1-like signaling (IIS) pathway, perhaps by regulating expression of the potassium channel exp-2, which in turn modulates the secretion of the insulin-like peptide daf-28. In Caenorhabditis elegans, this protein is Smad protein daf-8.